The sequence spans 804 residues: Zinc finger protein 541 (804 aa).

Disordered stretches follow at residues 21–120 (SKAS…NPDI) and 133–197 (TLDL…GNPR). A C2H2-type 1 zinc finger spans residues 285-307 (FICKNCSQMFYTEKGLSSHMCFH). Residues 379–426 (MEQEKDGEERDSKESSQQRKRKKRPPPKRLFIPPPPSTAGEPGPAGCH) are disordered. Basic and acidic residues predominate over residues 380-395 (EQEKDGEERDSKESSQ). A compositionally biased stretch (basic residues) spans 396–405 (QRKRKKRPPP). An ELM2 domain is found at 509-601 (PHINIGSRFQ…VALETLLLRG (93 aa)). The region spanning 616–667 (TGSDVWTPIEKRLFKKAFYAHKKDFYLIHKTIQTKTVAQCVEYYYIWKKMIK) is the SANT domain. Positions 680-743 (VKREPEEVER…TPEPSGSVES (64 aa)) are disordered. Positions 690-721 (TEEKVPCSPRERPSHHPIPELKIKTKSYRRES) are enriched in basic and acidic residues. Residues 747–769 (FPCRECERVFDKIKSRNAHMKRH) form a C2H2-type 2 zinc finger.

Interacts with DNTTIP1. Identified in a complex with KCDT19, HDAC1 and HSPA2s. Component of a histone deacetylase complex containing DNTTIP1, ZNF541, HDAC1 and HDAC2. Identified in a complex with HDAC1, HDAC2, DNTTIP1 and KCTD19.

Its subcellular location is the nucleus. Transcription regulator which is essential for male fertility and for the completion of meiotic prophase in spermatocytes. Regulates progression of the pachytene stage of meiotic prophase by activating the expression of genes involved in meiosis and post-meiosis during spermatogenesis. Maintains the repression of pre-pachytene transcriptional programs, including meiotic double-strand breaks (DSB) formation genes in pachytene spermatocytes and suppresses aberrant DSB formation after mid-pachytene, thus ensuring meiosis progression. The polypeptide is Zinc finger protein 541 (ZNF541) (Macaca fascicularis (Crab-eating macaque)).